The following is a 154-amino-acid chain: Interleukin-2 (154 aa).

Positions 1–20 are cleaved as a signal peptide; the sequence is MYKLQLLSCIALTLALVANS. Residue Thr-23 is glycosylated (O-linked (GalNAc...) threonine). A disulfide bridge links Cys-78 with Cys-126.

The protein belongs to the IL-2 family.

The protein resides in the secreted. Functionally, cytokine produced by activated CD4-positive helper T-cells and to a lesser extend activated CD8-positive T-cells and natural killer (NK) cells that plays pivotal roles in the immune response and tolerance. Binds to a receptor complex composed of either the high-affinity trimeric IL-2R (IL2RA/CD25, IL2RB/CD122 and IL2RG/CD132) or the low-affinity dimeric IL-2R (IL2RB and IL2RG). Interaction with the receptor leads to oligomerization and conformation changes in the IL-2R subunits resulting in downstream signaling starting with phosphorylation of JAK1 and JAK3. In turn, JAK1 and JAK3 phosphorylate the receptor to form a docking site leading to the phosphorylation of several substrates including STAT5. This process leads to activation of several pathways including STAT, phosphoinositide-3-kinase/PI3K and mitogen-activated protein kinase/MAPK pathways. Functions as a T-cell growth factor and can increase NK-cell cytolytic activity as well. Promotes strong proliferation of activated B-cells and subsequently immunoglobulin production. Plays a pivotal role in regulating the adaptive immune system by controlling the survival and proliferation of regulatory T-cells, which are required for the maintenance of immune tolerance. Moreover, participates in the differentiation and homeostasis of effector T-cell subsets, including Th1, Th2, Th17 as well as memory CD8-positive T-cells. The chain is Interleukin-2 (IL2) from Lama glama (Llama).